Here is a 155-residue protein sequence, read N- to C-terminus: Ribosome maturation factor RimP (155 aa).

This sequence belongs to the RimP family.

It is found in the cytoplasm. In terms of biological role, required for maturation of 30S ribosomal subunits. In Maridesulfovibrio salexigens (strain ATCC 14822 / DSM 2638 / NCIMB 8403 / VKM B-1763) (Desulfovibrio salexigens), this protein is Ribosome maturation factor RimP.